The sequence spans 251 residues: Ubiquinone/menaquinone biosynthesis C-methyltransferase UbiE (251 aa).

S-adenosyl-L-methionine contacts are provided by residues threonine 74, aspartate 95, and 123-124; that span reads NA.

The protein belongs to the class I-like SAM-binding methyltransferase superfamily. MenG/UbiE family.

It catalyses the reaction a 2-demethylmenaquinol + S-adenosyl-L-methionine = a menaquinol + S-adenosyl-L-homocysteine + H(+). The enzyme catalyses a 2-methoxy-6-(all-trans-polyprenyl)benzene-1,4-diol + S-adenosyl-L-methionine = a 5-methoxy-2-methyl-3-(all-trans-polyprenyl)benzene-1,4-diol + S-adenosyl-L-homocysteine + H(+). It participates in quinol/quinone metabolism; menaquinone biosynthesis; menaquinol from 1,4-dihydroxy-2-naphthoate: step 2/2. It functions in the pathway cofactor biosynthesis; ubiquinone biosynthesis. In terms of biological role, methyltransferase required for the conversion of demethylmenaquinol (DMKH2) to menaquinol (MKH2) and the conversion of 2-polyprenyl-6-methoxy-1,4-benzoquinol (DDMQH2) to 2-polyprenyl-3-methyl-6-methoxy-1,4-benzoquinol (DMQH2). This is Ubiquinone/menaquinone biosynthesis C-methyltransferase UbiE from Psychromonas ingrahamii (strain DSM 17664 / CCUG 51855 / 37).